We begin with the raw amino-acid sequence, 388 residues long: 1-deoxy-D-xylulose 5-phosphate reductoisomerase (388 aa).

7 residues coordinate NADPH: Thr-10, Gly-11, Thr-12, Ile-13, Arg-37, Gln-38, and Asn-122. Lys-123 is a binding site for 1-deoxy-D-xylulose 5-phosphate. Residue Glu-124 participates in NADPH binding. Asp-148 contacts Mn(2+). 1-deoxy-D-xylulose 5-phosphate is bound by residues Ser-149, Glu-150, Ser-179, and His-202. Glu-150 is a Mn(2+) binding site. NADPH is bound at residue Gly-208. 1-deoxy-D-xylulose 5-phosphate contacts are provided by Ser-215, Asn-220, Lys-221, and Glu-224. Glu-224 is a Mn(2+) binding site.

Belongs to the DXR family. The cofactor is Mg(2+). Mn(2+) is required as a cofactor.

The enzyme catalyses 2-C-methyl-D-erythritol 4-phosphate + NADP(+) = 1-deoxy-D-xylulose 5-phosphate + NADPH + H(+). Its pathway is isoprenoid biosynthesis; isopentenyl diphosphate biosynthesis via DXP pathway; isopentenyl diphosphate from 1-deoxy-D-xylulose 5-phosphate: step 1/6. In terms of biological role, catalyzes the NADPH-dependent rearrangement and reduction of 1-deoxy-D-xylulose-5-phosphate (DXP) to 2-C-methyl-D-erythritol 4-phosphate (MEP). The polypeptide is 1-deoxy-D-xylulose 5-phosphate reductoisomerase (Laribacter hongkongensis (strain HLHK9)).